A 58-amino-acid chain; its full sequence is Large ribosomal subunit protein bL32 (58 aa).

The segment at 1–24 (MAVPKKKTSKSKRDKRKATWKRKA) is disordered.

This sequence belongs to the bacterial ribosomal protein bL32 family.

The chain is Large ribosomal subunit protein bL32 from Synechococcus sp. (strain ATCC 27144 / PCC 6301 / SAUG 1402/1) (Anacystis nidulans).